The primary structure comprises 265 residues: Energy-coupling factor transporter transmembrane protein EcfT (265 aa).

6 consecutive transmembrane segments (helical) span residues 26 to 46 (MVFV…QTYA), 47 to 67 (VGII…MFLF), 72 to 92 (PILF…KGGA), 107 to 127 (VIMG…TTIM), 152 to 172 (LPVH…PTLM), and 243 to 263 (HTYD…ILYL).

This sequence belongs to the energy-coupling factor EcfT family. As to quaternary structure, forms a stable energy-coupling factor (ECF) transporter complex composed of 2 membrane-embedded substrate-binding proteins (S component), 2 ATP-binding proteins (A component) and 2 transmembrane proteins (T component). May be able to interact with more than 1 S component at a time.

Its subcellular location is the cell membrane. Transmembrane (T) component of an energy-coupling factor (ECF) ABC-transporter complex. Unlike classic ABC transporters this ECF transporter provides the energy necessary to transport a number of different substrates. This chain is Energy-coupling factor transporter transmembrane protein EcfT, found in Macrococcus caseolyticus (strain JCSC5402) (Macrococcoides caseolyticum).